Consider the following 324-residue polypeptide: Acetyl-coenzyme A carboxylase carboxyl transferase subunit alpha (324 aa).

In terms of domain architecture, CoA carboxyltransferase C-terminal spans 44–298; sequence ILQRKLLNLK…KNKIRDQLDF (255 aa).

This sequence belongs to the AccA family. As to quaternary structure, acetyl-CoA carboxylase is a heterohexamer composed of biotin carboxyl carrier protein (accB), biotin carboxylase (accC) and two subunits each of ACCase subunit alpha (accA) and ACCase subunit beta (accD).

It localises to the plastid. Its subcellular location is the chloroplast. The enzyme catalyses N(6)-carboxybiotinyl-L-lysyl-[protein] + acetyl-CoA = N(6)-biotinyl-L-lysyl-[protein] + malonyl-CoA. The protein operates within lipid metabolism; malonyl-CoA biosynthesis; malonyl-CoA from acetyl-CoA: step 1/1. Functionally, component of the acetyl coenzyme A carboxylase (ACC) complex. First, biotin carboxylase catalyzes the carboxylation of biotin on its carrier protein (BCCP) and then the CO(2) group is transferred by the carboxyltransferase to acetyl-CoA to form malonyl-CoA. The chain is Acetyl-coenzyme A carboxylase carboxyl transferase subunit alpha from Cyanidium caldarium (Red alga).